Consider the following 235-residue polypeptide: Orotidine 5'-phosphate decarboxylase (235 aa).

Residues Asp-12, Lys-34, 61-70, Thr-116, Arg-177, Gln-186, and Arg-207 each bind substrate; that span reads DMKLLDIDNT. Residue Lys-63 is the Proton donor of the active site.

Belongs to the OMP decarboxylase family. Type 1 subfamily. Homodimer.

The catalysed reaction is orotidine 5'-phosphate + H(+) = UMP + CO2. It functions in the pathway pyrimidine metabolism; UMP biosynthesis via de novo pathway; UMP from orotate: step 2/2. Its function is as follows. Catalyzes the decarboxylation of orotidine 5'-monophosphate (OMP) to uridine 5'-monophosphate (UMP). The sequence is that of Orotidine 5'-phosphate decarboxylase from Agrobacterium fabrum (strain C58 / ATCC 33970) (Agrobacterium tumefaciens (strain C58)).